The sequence spans 515 residues: Signal transduction histidine-protein kinase/phosphatase MprB (515 aa).

Residues 1–24 (MTLPPPPSRLKPPRNTSSLSLRWR) lie on the Cytoplasmic side of the membrane. A helical membrane pass occupies residues 25 to 45 (VMLLAMSMVAMVVVLMSVAVY). Residues 46-165 (AVVSRALYDD…TGQVLGRLGT (120 aa)) lie on the Extracellular side of the membrane. A helical membrane pass occupies residues 166–186 (VLLIVGGVGVAVAAIAGGMVA). One can recognise an HAMP domain in the interval 187–239 (RAGLRPVGRLTQAAERVARTDDLRPIPVFGSDELARLTEAFNMMLRALTESRE). Over 187–515 (RAGLRPVGRL…GKSRSASKEL (329 aa)) the chain is Cytoplasmic. Residues 247–467 (DAGHELRTPL…SFYVMLPGRP (221 aa)) enclose the Histidine kinase domain. His250 carries the phosphohistidine; by autocatalysis modification. Positions 468–515 (LTPGGNGTAPVPAAQFDPDMRSAGSRADRRVIKNTETNGKSRSASKEL) are disordered.

Requires Mg(2+) as cofactor. The cofactor is Mn(2+). Post-translationally, autophosphorylated.

The protein resides in the cell membrane. It carries out the reaction ATP + protein L-histidine = ADP + protein N-phospho-L-histidine.. Functionally, member of the two-component regulatory system MprB/MprA which contributes to maintaining a balance among several systems involved in stress resistance and is required for establishment and maintenance of persistent infection in the host. In response to environmental signals MprB acts both as a membrane-associated protein kinase that undergoes autophosphorylation and subsequently transfers the phosphate to MprA, and a protein phosphatase that dephosphorylates phospho-MprA. The protein is Signal transduction histidine-protein kinase/phosphatase MprB (mprB) of Mycobacterium sp. (strain KMS).